Here is a 264-residue protein sequence, read N- to C-terminus: Tryptophan synthase alpha chain (264 aa).

Residues Glu-49 and Asp-60 each act as proton acceptor in the active site.

It belongs to the TrpA family. In terms of assembly, tetramer of two alpha and two beta chains.

It carries out the reaction (1S,2R)-1-C-(indol-3-yl)glycerol 3-phosphate + L-serine = D-glyceraldehyde 3-phosphate + L-tryptophan + H2O. It functions in the pathway amino-acid biosynthesis; L-tryptophan biosynthesis; L-tryptophan from chorismate: step 5/5. Its function is as follows. The alpha subunit is responsible for the aldol cleavage of indoleglycerol phosphate to indole and glyceraldehyde 3-phosphate. The sequence is that of Tryptophan synthase alpha chain from Synechocystis sp. (strain ATCC 27184 / PCC 6803 / Kazusa).